The sequence spans 323 residues: MLSVNKKALEIVNKMIENKEEINIDVIKLENGATVLDCGVNVPGSWKAGKLFTKICLGGLAHVGISLSPCECKGITLPYVKIKTSHPAIATLGAQKAGWAVKVGKYFAMGSGPARALAKKPKKTYEEIGYEDDADVAVLCLEASKLPNEEVAEYVAKECGVEVENVYLLVAPTASLVGSIQISGRVVENGTYKMLEVLEFDVNKVKYAAGLAPIAPIIGDDFAMMGATNDMVLYGGITYYYIKSDENDDIESLCKALPSCASKDYGKPFMEVFKAADYDFYKIDKGMFAPAVVVINDMTTGKVYRAGKVNAEVLKKSLGWTEL.

Belongs to the MCH family.

It localises to the cytoplasm. It catalyses the reaction 5,10-methenyl-5,6,7,8-tetrahydromethanopterin + H2O = N(5)-formyl-5,6,7,8-tetrahydromethanopterin + H(+). Its pathway is one-carbon metabolism; methanogenesis from CO(2); 5,10-methenyl-5,6,7,8-tetrahydromethanopterin from CO(2): step 3/3. In terms of biological role, catalyzes the reversible interconversion of 5-formyl-H(4)MPT to methenyl-H(4)MPT(+). The chain is Methenyltetrahydromethanopterin cyclohydrolase (mch) from Methanocaldococcus jannaschii (strain ATCC 43067 / DSM 2661 / JAL-1 / JCM 10045 / NBRC 100440) (Methanococcus jannaschii).